Here is a 77-residue protein sequence, read N- to C-terminus: Secapin (77 aa).

The N-terminal stretch at 1–32 is a signal peptide; sequence MKNYSKNATHLITVLLFSFVVILLIIPSKCEA. The propeptide occupies 33-52; it reads VSNDMQPLEARSADLVPEPR. A disulfide bridge connects residues cysteine 61 and cysteine 72.

Belongs to the secapin family. As to expression, expressed by the venom gland.

It is found in the secreted. Serine protease inhibitor which exhibits antifibrinolytic, antielastolytic and antimicrobial activities. Displays antimicrobial activity against bacteria and fungi. Likely functions in the innate immune response to microbial infection and possibly in the venom, as an antifibrinolytic agent. Not toxic to mice but does induce slight sedation at higher doses (from 40 mg/kg). At a dose of 80 mg/kg, sedation occurs 15 minutes after injection and is accompanied by piloerection and hypothermia. The polypeptide is Secapin (Apis mellifera (Honeybee)).